A 716-amino-acid polypeptide reads, in one-letter code: Beta-1,2-glucosyltransferase (716 aa).

10 residues coordinate sophorose: tyrosine 52, isoleucine 99, alanine 101, glutamate 102, asparagine 175, glutamate 176, glycine 278, tryptophan 279, glutamate 343, and arginine 349. Catalysis depends on glutamate 176, which acts as the Proton donor/acceptor. The beta-D-glucose site is built by glutamate 176, glycine 278, and tryptophan 279. Catalysis depends on glutamate 343, which acts as the Nucleophile. Beta-D-glucose-binding residues include arginine 349, lysine 358, and glutamate 361. Residue tyrosine 378 coordinates sophorose. The beta-D-glucose site is built by serine 708 and tyrosine 709.

It belongs to the glycosyl hydrolase 35 family. In terms of assembly, homidimer.

It is found in the cytoplasm. The catalysed reaction is a D-glucoside + [(1-&gt;2)-beta-D-glucosyl](n) = a beta-D-glucosyl-(1-&gt;2)-D-glucoside + [(1-&gt;2)-beta-D-glucosyl](n-1). Functionally, glycosyltransferase acting on beta-1,2-glucooligosaccharides. Catalyzes the transfer of a glucosyl residue from the non-reducing end of a 1,2-beta-D-glucan to a glucose residue of an acceptor molecule, forming a beta-1,2-glucosidic bond. The beta-1,2-linked glucose dimer sophorose is the preferred donor in vitro. Has a very broad specificity for the acceptor and can act on various aryl- and alkyl-glucosides. Does not show any hydrolytic activity. In Ignavibacterium album (strain DSM 19864 / JCM 16511 / NBRC 101810 / Mat9-16), this protein is Beta-1,2-glucosyltransferase.